The sequence spans 156 residues: Small ribosomal subunit protein uS15 (156 aa).

Residues Met-1–Val-67 form a disordered region. Residues Gly-10–Ala-19 show a composition bias toward basic and acidic residues. Residues Glu-21–Ala-32 show a composition bias toward acidic residues.

The protein belongs to the universal ribosomal protein uS15 family. Part of the 30S ribosomal subunit.

This is Small ribosomal subunit protein uS15 from Haloarcula marismortui (strain ATCC 43049 / DSM 3752 / JCM 8966 / VKM B-1809) (Halobacterium marismortui).